Reading from the N-terminus, the 384-residue chain is tRNA-specific 2-thiouridylase MnmA (384 aa).

ATP contacts are provided by residues 9–16 (GMSGGVDS) and Met35. The interval 95–97 (NPD) is interaction with target base in tRNA. Residue Cys100 is the Nucleophile of the active site. An intrachain disulfide couples Cys100 to Cys196. Gly124 contributes to the ATP binding site. Residues 146-148 (KDQ) are interaction with tRNA. Cys196 (cysteine persulfide intermediate) is an active-site residue. Residues 308–309 (RY) are interaction with tRNA.

Belongs to the MnmA/TRMU family.

The protein resides in the cytoplasm. It catalyses the reaction S-sulfanyl-L-cysteinyl-[protein] + uridine(34) in tRNA + AH2 + ATP = 2-thiouridine(34) in tRNA + L-cysteinyl-[protein] + A + AMP + diphosphate + H(+). In terms of biological role, catalyzes the 2-thiolation of uridine at the wobble position (U34) of tRNA, leading to the formation of s(2)U34. The sequence is that of tRNA-specific 2-thiouridylase MnmA from Burkholderia vietnamiensis (strain G4 / LMG 22486) (Burkholderia cepacia (strain R1808)).